The chain runs to 217 residues: MGYDDTSLANVPPVEDKDLLIPRQKYLLSGVHVGTGIRTKDMEKFIYRVRPDGLCIIDIRKIDERIRTAGKFLARFDPDRVLAVSARIYGFKPVRKFAEYTGAMYITGRILPGTLTNPQAPLHLEPDVVLLSDPRVDRQIHIESVRMGIPVVALVDADNMLENIDLAIPVNNKGRRSLALVYWLLTREVLRNRKVIPPDGDLPEGYEEFATRIMGVR.

Belongs to the universal ribosomal protein uS2 family.

The sequence is that of Small ribosomal subunit protein uS2 from Korarchaeum cryptofilum (strain OPF8).